We begin with the raw amino-acid sequence, 465 residues long: Protein CitXG (465 aa).

The interval 1 to 182 (MQHFFTTFST…QSLAQNHDFA (182 aa)) is apo-citrate lyase phosphoribosyl-dephospho-CoA transferase. Positions 183–465 (EHIGEQVYLA…TIFFLSFRGN (283 aa)) are 2-(5''-triphosphoribosyl)-3'-dephosphocoenzyme-A synthase.

This sequence in the N-terminal section; belongs to the CitX family. In the C-terminal section; belongs to the CitG/MdcB family.

The enzyme catalyses apo-[citrate lyase ACP] + 2'-(5''-triphospho-alpha-D-ribosyl)-3'-dephospho-CoA = holo-[citrate lyase ACP] + diphosphate. It catalyses the reaction 3'-dephospho-CoA + ATP = 2'-(5''-triphospho-alpha-D-ribosyl)-3'-dephospho-CoA + adenine. Functionally, bifunctional enzyme that catalyzes formation of 2-(5''-triphosphoribosyl)-3'-dephosphocoenzyme-A, and then the transfer of this prosthetic group precursor to the apo-acyl carrier protein (gamma chain) of the citrate lyase to yield the holo-acyl carrier protein. The chain is Protein CitXG (citXG) from Haemophilus influenzae (strain ATCC 51907 / DSM 11121 / KW20 / Rd).